Here is a 279-residue protein sequence, read N- to C-terminus: Syntaxin-21 (279 aa).

Residues Met-1–Gln-34 are disordered. Ser-2 bears the N-acetylserine mark. Residues Ser-2–Leu-258 lie on the Cytoplasmic side of the membrane. The segment covering Gly-21 to Asp-31 has biased composition (polar residues). Positions Glu-65–Ala-94 form a coiled coil. The t-SNARE coiled-coil homology domain occupies Glu-186–Ala-248. A helical; Anchor for type IV membrane protein membrane pass occupies residues Thr-259–Val-279.

Belongs to the syntaxin family. As to quaternary structure, interacts with VTI11 and SYP51 to form a t-SNARE complex and with alpha-SNAP to form a 20S complex. As to expression, a high level expression is seen in the roots while a low level expression is seen in the leaves.

The protein resides in the prevacuolar compartment membrane. Its function is as follows. May function in the docking or fusion of transport vesicles with the prevacuolar membrane. In Arabidopsis thaliana (Mouse-ear cress), this protein is Syntaxin-21 (SYP21).